We begin with the raw amino-acid sequence, 346 residues long: MTHTVAVSGASGYAGGEALRLLAGHPFVTVGAITAHSNAGERLGALQPHLHALVDRVLAETTADVLADHDVVILALPHGASGALAAEIAERSPDTLVIDAGADHRLESAADWEAFYGTAHAGTWPYGLPELPGQRERLAGTRRIAVPGCYPTTSILALAPGFAAGLLEPRDVVIVAASGTSGAGKALKPHLLGAEVMGGMSPYGVGGGHRHTPEIEQGLAQAAGEPVRISFTPTLAPMSRGILATATARLRPGVAAADVRAAWASAYGREPFVHLLPEGQWPTTKAVLGSNHVQLQLAVDERAGRVIVCAALDNLTKGTAGGAVQSMNIALGLPEQAGLEQQGVAP.

Residue Cys-149 is part of the active site.

The protein belongs to the NAGSA dehydrogenase family. Type 1 subfamily.

It is found in the cytoplasm. The enzyme catalyses N-acetyl-L-glutamate 5-semialdehyde + phosphate + NADP(+) = N-acetyl-L-glutamyl 5-phosphate + NADPH + H(+). It functions in the pathway amino-acid biosynthesis; L-arginine biosynthesis; N(2)-acetyl-L-ornithine from L-glutamate: step 3/4. Functionally, catalyzes the NADPH-dependent reduction of N-acetyl-5-glutamyl phosphate to yield N-acetyl-L-glutamate 5-semialdehyde. This Micrococcus luteus (strain ATCC 4698 / DSM 20030 / JCM 1464 / CCM 169 / CCUG 5858 / IAM 1056 / NBRC 3333 / NCIMB 9278 / NCTC 2665 / VKM Ac-2230) (Micrococcus lysodeikticus) protein is N-acetyl-gamma-glutamyl-phosphate reductase.